We begin with the raw amino-acid sequence, 155 residues long: Cytochrome c-type biogenesis protein CcmE (155 aa).

The Cytoplasmic portion of the chain corresponds to 1–8; it reads MNPLRKKR. The helical; Signal-anchor for type II membrane protein transmembrane segment at 9 to 29 threads the bilayer; sequence LLIIAALLAGVGLAMTLALGA. At 30–155 the chain is on the periplasmic side; that stretch reads LKENINLFYT…GGSSTPAKQG (126 aa). 2 residues coordinate heme: histidine 124 and tyrosine 128. A disordered region spans residues 134-155; it reads TKALRDSGQAAPGGSSTPAKQG.

This sequence belongs to the CcmE/CycJ family.

The protein localises to the cell inner membrane. Heme chaperone required for the biogenesis of c-type cytochromes. Transiently binds heme delivered by CcmC and transfers the heme to apo-cytochromes in a process facilitated by CcmF and CcmH. This chain is Cytochrome c-type biogenesis protein CcmE, found in Pseudomonas savastanoi pv. phaseolicola (strain 1448A / Race 6) (Pseudomonas syringae pv. phaseolicola (strain 1448A / Race 6)).